The chain runs to 79 residues: CDC42 small effector protein 1 (79 aa).

2 S-palmitoyl cysteine lipidation sites follow: Cys10 and Cys11. Residues 30–43 enclose the CRIB domain; it reads IGEPMNFVHLTHIG. The tract at residues 48-79 is disordered; that stretch reads GAGDGLAMTGAVQEQMRSKGNRDRPWSNSRGL. The span at 63–72 shows a compositional bias: basic and acidic residues; it reads MRSKGNRDRP.

Belongs to the CDC42SE/SPEC family. In terms of assembly, interacts with CDC42 (in GTP-bound form). Interacts weakly with RAC1 and not at all with RHOA.

It localises to the cytoplasm. The protein resides in the cytoskeleton. It is found in the cell membrane. Its function is as follows. Probably involved in the organization of the actin cytoskeleton by acting downstream of CDC42, inducing actin filament assembly. Alters CDC42-induced cell shape changes. In activated T-cells, may play a role in CDC42-mediated F-actin accumulation at the immunological synapse. May play a role in early contractile events in phagocytosis in macrophages. The chain is CDC42 small effector protein 1 (CDC42SE1) from Bos taurus (Bovine).